A 598-amino-acid polypeptide reads, in one-letter code: MFS transporter L2 (598 aa).

The next 3 helical transmembrane spans lie at 83–103 (IAAFLSLCIIVLMAALDATSI), 122–142 (FWAGTSFLLTSTIFQPVLGSF), and 150–170 (SLIYISLVFFLAGSIIPAVAN). N-linked (GlcNAc...) asparagine glycosylation is present at asparagine 171. The next 5 helical transmembrane spans lie at 183-203 (GVGGGGIIALTEMVVVDTVPL), 212-232 (FFGMMWSFGTVAGPLIGGAFA), 239-259 (WVFWINLPFLGIGTVLITVFL), 277-297 (WIGMVLFLGSTTGFLIPITWG), and 309-329 (LVPLIVSAAGIVAFIVHQEKF). Asparagine 342 is a glycosylation site (N-linked (GlcNAc...) asparagine). 6 helical membrane passes run 346–366 (ALLYLTTVIHGIILWAILYFM), 383–403 (VALFPWTFTVAPGAVATGIAI), 411–431 (WANWAGWFLATLGSGLLILLK), 439–459 (WIFLNLVGGIGTGILFPAMAL), 476–496 (MFSFFRAFGQTLGVAIGGVVF), and 550–570 (YIWIVATVLAGVSLVATLFID).

Belongs to the major facilitator superfamily.

The protein resides in the membrane. Its function is as follows. MFS transporter; part of the gene cluster that mediates the biosynthesis of squalestatin S1 (SQS1, also known as zaragozic acid A), a lead compound for the treatment of hyper-cholesterolemia by targeting squalene synthase (SS). This is MFS transporter L2 from Phoma sp. (strain ATCC 20986 / MF5453).